A 467-amino-acid polypeptide reads, in one-letter code: D-hydantoinase (467 aa).

Positions 65, 67, and 156 each coordinate Zn(2+). The residue at position 156 (Lys-156) is an N6-carboxylysine. Tyr-161 contacts substrate. His-189 and His-245 together coordinate Zn(2+). Substrate is bound at residue Ser-294. Asp-321 is a binding site for Zn(2+). Substrate is bound at residue Asn-343.

The protein belongs to the metallo-dependent hydrolases superfamily. Hydantoinase/dihydropyrimidinase family. In terms of assembly, homotetramer. Requires Zn(2+) as cofactor. Carboxylation allows a single lysine to coordinate two zinc ions.

Catalyzes the stereospecific hydrolysis of the cyclic amide bond of D-hydantoin derivatives. The polypeptide is D-hydantoinase (hyuA) (Streptomyces coelicolor (strain ATCC BAA-471 / A3(2) / M145)).